The chain runs to 337 residues: Ketol-acid reductoisomerase (NADP(+)) (337 aa).

The KARI N-terminal Rossmann domain maps to 3–183; the sequence is VEMFYDDDAD…GGARAGVIKT (181 aa). NADP(+) is bound by residues 26-29, Lys49, Ser52, Ser54, and 84-87; these read YGSQ and DTAQ. His109 is an active-site residue. NADP(+) is bound at residue Gly135. Residues 184-329 form the KARI C-terminal knotted domain; sequence TFKEETETDL…KKLRDLMSWV (146 aa). 4 residues coordinate Mg(2+): Asp192, Glu196, Glu228, and Glu232. Ser253 provides a ligand contact to substrate.

The protein belongs to the ketol-acid reductoisomerase family. The cofactor is Mg(2+).

The enzyme catalyses (2R)-2,3-dihydroxy-3-methylbutanoate + NADP(+) = (2S)-2-acetolactate + NADPH + H(+). The catalysed reaction is (2R,3R)-2,3-dihydroxy-3-methylpentanoate + NADP(+) = (S)-2-ethyl-2-hydroxy-3-oxobutanoate + NADPH + H(+). It functions in the pathway amino-acid biosynthesis; L-isoleucine biosynthesis; L-isoleucine from 2-oxobutanoate: step 2/4. It participates in amino-acid biosynthesis; L-valine biosynthesis; L-valine from pyruvate: step 2/4. Functionally, involved in the biosynthesis of branched-chain amino acids (BCAA). Catalyzes an alkyl-migration followed by a ketol-acid reduction of (S)-2-acetolactate (S2AL) to yield (R)-2,3-dihydroxy-isovalerate. In the isomerase reaction, S2AL is rearranged via a Mg-dependent methyl migration to produce 3-hydroxy-3-methyl-2-ketobutyrate (HMKB). In the reductase reaction, this 2-ketoacid undergoes a metal-dependent reduction by NADPH to yield (R)-2,3-dihydroxy-isovalerate. The chain is Ketol-acid reductoisomerase (NADP(+)) from Mycobacterium sp. (strain JLS).